We begin with the raw amino-acid sequence, 249 residues long: Bax inhibitor 1 (249 aa).

6 consecutive transmembrane segments (helical) span residues 39–59, 65–85, 93–113, 119–139, 151–171, and 213–233; these read LVYL…YLHV, GMLT…VPVF, ILLA…KLAV, ILVT…CAAI, GLLS…SIFG, and HALT…VIML.

It belongs to the BI1 family. As to expression, ubiquitous.

It is found in the membrane. In terms of biological role, suppressor of apoptosis. This chain is Bax inhibitor 1 (BI1), found in Oryza sativa subsp. japonica (Rice).